A 363-amino-acid chain; its full sequence is Putative agmatine deiminase 1 (363 aa).

Residue C356 is the Amidino-cysteine intermediate of the active site.

This sequence belongs to the agmatine deiminase family.

The catalysed reaction is agmatine + H2O = N-carbamoylputrescine + NH4(+). The polypeptide is Putative agmatine deiminase 1 (Listeria monocytogenes serovar 1/2a (strain ATCC BAA-679 / EGD-e)).